Here is a 113-residue protein sequence, read N- to C-terminus: Urease subunit beta (113 aa).

Belongs to the urease beta subunit family. In terms of assembly, heterotrimer of UreA (gamma), UreB (beta) and UreC (alpha) subunits. Three heterotrimers associate to form the active enzyme.

Its subcellular location is the cytoplasm. It carries out the reaction urea + 2 H2O + H(+) = hydrogencarbonate + 2 NH4(+). Its pathway is nitrogen metabolism; urea degradation; CO(2) and NH(3) from urea (urease route): step 1/1. The protein is Urease subunit beta of Nitrosospira multiformis (strain ATCC 25196 / NCIMB 11849 / C 71).